A 222-amino-acid polypeptide reads, in one-letter code: von Willebrand factor C domain-containing protein 2-like (222 aa).

The signal sequence occupies residues 1–21 (MALHIHEACILLLVIPGLVTS). VWFC domains lie at 51 to 110 (KGCV…PECK) and 114 to 172 (NFCE…PVCK).

As to quaternary structure, peripherally associated with AMPAR complex. AMPAR complex consists of an inner core made of 4 pore-forming GluA/GRIA proteins (GRIA1, GRIA2, GRIA3 and GRIA4) and 4 major auxiliary subunits arranged in a twofold symmetry. One of the two pairs of distinct binding sites is occupied either by CNIH2, CNIH3 or CACNG2, CACNG3. The other harbors CACNG2, CACNG3, CACNG4, CACNG8 or GSG1L. This inner core of AMPAR complex is complemented by outer core constituents binding directly to the GluA/GRIA proteins at sites distinct from the interaction sites of the inner core constituents. Outer core constituents include at least PRRT1, PRRT2, CKAMP44/SHISA9, FRRS1L and NRN1. The proteins of the inner and outer core serve as a platform for other, more peripherally associated AMPAR constituents, including VWC2L. Alone or in combination, these auxiliary subunits control the gating and pharmacology of the AMPAR complex and profoundly impact their biogenesis and protein processing. In terms of tissue distribution, predominantly expressed in the brain (at protein level). Also detected in bones, including femur and calvaria, heart, lung and kidney. Isoform 5 is predominant in lung and heart, compared to isoforms 1 and 3. Isoform 4 is expressed in femur and calvaria at higher levels than isoforms 1 and 5. Isoforms 1 and 4 are expressed at higher levels than isoform 5 in kidney and brain.

It localises to the secreted. The protein localises to the synapse. May play a role in neurogenesis. May promote matrix mineralization, but has been shown to weakly, but significantly inhibit BMP2 and BMP6 activity in a preosteoblastic cell line. This chain is von Willebrand factor C domain-containing protein 2-like (Vwc2l), found in Mus musculus (Mouse).